Reading from the N-terminus, the 1097-residue chain is Cyclin-T (1097 aa).

3 disordered regions span residues 319 to 782 (SNIT…SNGI), 804 to 936 (LLKP…SLQA), and 985 to 1097 (AAPV…YNKK). Over residues 332 to 350 (DSRDRDRDRERERERERDP) the composition is skewed to basic and acidic residues. Low complexity-rich tracts occupy residues 373-390 (SSSV…SSSS), 420-456 (PSSH…GRPS), 467-478 (GMPPVGVGMPPH), and 489-511 (PQQP…SGMS). Residues 580–591 (LPYSQSQSYGHM) are compositionally biased toward polar residues. The span at 592-606 (QQQPVPQSQQQQMPP) shows a compositional bias: low complexity. A compositionally biased stretch (polar residues) spans 609-620 (SQHSLQSKNSLF). Positions 652 to 675 (HDYKLNSHPRDKESPKKERLTPTK) are enriched in basic and acidic residues. The segment covering 687–698 (GSGNSSSGSGSS) has biased composition (low complexity). The segment covering 860-870 (GEIKEESSSKS) has biased composition (basic and acidic residues). A compositionally biased stretch (basic residues) spans 871-883 (EKKKKKDKHKHKE). The segment covering 884-895 (KDKSKDKTEKEE) has biased composition (basic and acidic residues). Position 916 is a phosphoserine (Ser-916). Over residues 993–1007 (GAGGGGYSSSGGSSS) the composition is skewed to gly residues. A compositionally biased stretch (basic and acidic residues) spans 1016-1031 (SDRDRDKESKKNKSQD). Residues 1037 to 1050 (GAGGGIFNPLGGAG) are compositionally biased toward gly residues. Positions 1087–1097 (APPPMPVYNKK) are enriched in pro residues.

Belongs to the cyclin family. Cyclin C subfamily. As to quaternary structure, component of the super elongation complex (SEC), at least composed of Ell, Cdk9, cyclin-T (CycT), lilli and ear. Associates with CDK9 to form P-TEFb.

Its subcellular location is the nucleus. Its function is as follows. Regulatory subunit of the cyclin-dependent kinase pair (CDK9/cyclin T) complex, also called positive transcription elongation factor B (P-TEFb), which is proposed to facilitate the transition from abortive to production elongation by phosphorylating the CTD (carboxy-terminal domain) of the large subunit of RNA polymerase II (RNAP II). This chain is Cyclin-T (CycT), found in Drosophila melanogaster (Fruit fly).